The primary structure comprises 1649 residues: DNA-directed RNA polymerase subunit beta' (1649 aa).

4 residues coordinate Zn(2+): Cys-62, Cys-64, Cys-77, and Cys-80. Mg(2+) is bound by residues Asp-746, Asp-748, and Asp-750. Residues Cys-1077, Cys-1268, Cys-1275, and Cys-1278 each coordinate Zn(2+).

This sequence belongs to the RNA polymerase beta' chain family. In terms of assembly, the RNAP catalytic core consists of 2 alpha, 1 beta, 1 beta' and 1 omega subunit. When a sigma factor is associated with the core the holoenzyme is formed, which can initiate transcription. Mg(2+) is required as a cofactor. Requires Zn(2+) as cofactor.

The enzyme catalyses RNA(n) + a ribonucleoside 5'-triphosphate = RNA(n+1) + diphosphate. DNA-dependent RNA polymerase catalyzes the transcription of DNA into RNA using the four ribonucleoside triphosphates as substrates. The sequence is that of DNA-directed RNA polymerase subunit beta' from Thermosipho africanus (strain TCF52B).